A 630-amino-acid polypeptide reads, in one-letter code: tRNA uridine 5-carboxymethylaminomethyl modification enzyme MnmG (630 aa).

13–18 (GGGHAG) is a binding site for FAD. 273–287 (GPRYCPSIEDKVNRF) contacts NAD(+).

This sequence belongs to the MnmG family. Homodimer. Heterotetramer of two MnmE and two MnmG subunits. Requires FAD as cofactor.

It is found in the cytoplasm. Its function is as follows. NAD-binding protein involved in the addition of a carboxymethylaminomethyl (cmnm) group at the wobble position (U34) of certain tRNAs, forming tRNA-cmnm(5)s(2)U34. This chain is tRNA uridine 5-carboxymethylaminomethyl modification enzyme MnmG, found in Saccharophagus degradans (strain 2-40 / ATCC 43961 / DSM 17024).